A 439-amino-acid polypeptide reads, in one-letter code: Packaging protein 1 (439 aa).

Residues 1–23 are compositionally biased toward polar residues; that stretch reads MSTQIPARQETYDPSQSSGTKTP. Residues 1 to 42 are disordered; it reads MSTQIPARQETYDPSQSSGTKTPSHPYDGNPTRSYPKRNAGK. 151–158 lines the ATP pocket; the sequence is GPTGSGKS. The segment at 419 to 439 is DNA-binding; the sequence is ERNPKLTDLEKLSPPGTFQET.

The protein belongs to the adenoviridae packaging protein 1 family. As to quaternary structure, homodimer. Part of a genome packaging complex composed of packaging proteins 1, 2 and 3; this complex specifically binds to the packaging sequence on the left end of viral genomic DNA and performs packaging of the viral genome. Interacts with protein 33K.

The protein localises to the virion. It localises to the host nucleus. The protein resides in the host nucleoplasm. Its subcellular location is the host nucleolus. Its function is as follows. Component of the packaging machinery which encapsidates the viral DNA into preformed capsids and transcriptional activator of the viral major late promoter (MLP). Binds, along with packaging proteins 2 and 3, to the specific packaging sequence on the left end of viral genomic DNA and displays ATPase activity thereby providing the power stroke of the packaging machinery. The activity of packaging protein IVa2 is stimulated by protein 33K which acts as a terminase. May be the protein that pumps DNA into the capsid powered by ATP hydrolysis. Specifically binds to the 5'-CG-3' nucleotides of the repeats making up the packaging sequence. Component of the DEF-A and DEF-B transcription factors that bind downstream elements of the major late promoter (MLP), and stimulate transcription from the MLP after initiation of viral DNA replication. DEF-A is a heterodimer packaging proteins 1 and 2 and DEF-B is a homodimer of packaging protein 1. This Fowl adenovirus A serotype 1 (strain CELO / Phelps) (FAdV-1) protein is Packaging protein 1.